The primary structure comprises 201 residues: Recombination protein RecR (201 aa).

The C4-type zinc-finger motif lies at 57–74; sequence CSICGNITATDTDPCVIC. The 97-residue stretch at 82–178 folds into the Toprim domain; it reads STVFVVENSR…AVTRLAHGLA (97 aa).

It belongs to the RecR family.

In terms of biological role, may play a role in DNA repair. It seems to be involved in an RecBC-independent recombinational process of DNA repair. It may act with RecF and RecO. The polypeptide is Recombination protein RecR (Leuconostoc mesenteroides subsp. mesenteroides (strain ATCC 8293 / DSM 20343 / BCRC 11652 / CCM 1803 / JCM 6124 / NCDO 523 / NBRC 100496 / NCIMB 8023 / NCTC 12954 / NRRL B-1118 / 37Y)).